Reading from the N-terminus, the 301-residue chain is Probable cyclic nucleotide phosphodiesterase RER_40650 (301 aa).

Fe cation contacts are provided by Asp-20, His-22, Asp-61, Asn-95, His-167, His-205, and His-207. AMP-binding positions include His-22, Asp-61, and 95–96 (NH). His-207 contacts AMP.

It belongs to the cyclic nucleotide phosphodiesterase class-III family. Fe(2+) is required as a cofactor.

The chain is Probable cyclic nucleotide phosphodiesterase RER_40650 from Rhodococcus erythropolis (strain PR4 / NBRC 100887).